We begin with the raw amino-acid sequence, 147 residues long: Large ribosomal subunit protein uL15 (147 aa).

The segment at 1–46 is disordered; the sequence is MSIRLENLSYTPGARKEKHRKGRGHAAGKGKQAGRGQSGQKKRSTV. Residues 16 to 28 are compositionally biased toward basic residues; the sequence is KEKHRKGRGHAAG.

This sequence belongs to the universal ribosomal protein uL15 family. Part of the 50S ribosomal subunit.

Its function is as follows. Binds to the 23S rRNA. This chain is Large ribosomal subunit protein uL15, found in Mesomycoplasma hyopneumoniae (strain J / ATCC 25934 / NCTC 10110) (Mycoplasma hyopneumoniae).